Reading from the N-terminus, the 270-residue chain is Formamidopyrimidine-DNA glycosylase (270 aa).

Catalysis depends on P2, which acts as the Schiff-base intermediate with DNA. The active-site Proton donor is the E3. K58 acts as the Proton donor; for beta-elimination activity in catalysis. Residues H91, R110, and R151 each coordinate DNA. The segment at 236–270 (FVYGRGGMPCKLCGTTLREAKLGQRASVYCPRCQR) adopts an FPG-type zinc-finger fold. R260 acts as the Proton donor; for delta-elimination activity in catalysis.

It belongs to the FPG family. Monomer. The cofactor is Zn(2+).

The catalysed reaction is Hydrolysis of DNA containing ring-opened 7-methylguanine residues, releasing 2,6-diamino-4-hydroxy-5-(N-methyl)formamidopyrimidine.. The enzyme catalyses 2'-deoxyribonucleotide-(2'-deoxyribose 5'-phosphate)-2'-deoxyribonucleotide-DNA = a 3'-end 2'-deoxyribonucleotide-(2,3-dehydro-2,3-deoxyribose 5'-phosphate)-DNA + a 5'-end 5'-phospho-2'-deoxyribonucleoside-DNA + H(+). Its function is as follows. Involved in base excision repair of DNA damaged by oxidation or by mutagenic agents. Acts as a DNA glycosylase that recognizes and removes damaged bases. Has a preference for oxidized purines, such as 7,8-dihydro-8-oxoguanine (8-oxoG). Has AP (apurinic/apyrimidinic) lyase activity and introduces nicks in the DNA strand. Cleaves the DNA backbone by beta-delta elimination to generate a single-strand break at the site of the removed base with both 3'- and 5'-phosphates. The sequence is that of Formamidopyrimidine-DNA glycosylase from Pseudomonas putida (strain W619).